The sequence spans 207 residues: MKLLNLKIMNKKRLKDQLYLLVILEKNLIKLELLSFSNLIRRILLKEIYNFKVSTISIFLFNSNKFCYKIHEFTKVEEVKNNLVSFLILLKEIKFRSYYKLKTKRTFALLKIKQFTQVFLTDIILPNNFKILSIDNNLIKLNSLDINLKVLLELHKSKGYNFNPVKKVNYIEENNVYFEIYTNQTSTPLEVLVKSLKIIKLETYLAI.

Belongs to the RNA polymerase alpha chain family. In plastids the minimal PEP RNA polymerase catalytic core is composed of four subunits: alpha, beta, beta', and beta''. When a (nuclear-encoded) sigma factor is associated with the core the holoenzyme is formed, which can initiate transcription.

It localises to the plastid. The protein resides in the chloroplast. It carries out the reaction RNA(n) + a ribonucleoside 5'-triphosphate = RNA(n+1) + diphosphate. In terms of biological role, DNA-dependent RNA polymerase catalyzes the transcription of DNA into RNA using the four ribonucleoside triphosphates as substrates. The polypeptide is DNA-directed RNA polymerase subunit alpha (rpoA) (Euglena myxocylindracea).